The following is a 257-amino-acid chain: Imidazole glycerol phosphate synthase subunit HisF (257 aa).

Catalysis depends on residues Asp11 and Asp130.

It belongs to the HisA/HisF family. Heterodimer of HisH and HisF.

It localises to the cytoplasm. It catalyses the reaction 5-[(5-phospho-1-deoxy-D-ribulos-1-ylimino)methylamino]-1-(5-phospho-beta-D-ribosyl)imidazole-4-carboxamide + L-glutamine = D-erythro-1-(imidazol-4-yl)glycerol 3-phosphate + 5-amino-1-(5-phospho-beta-D-ribosyl)imidazole-4-carboxamide + L-glutamate + H(+). It participates in amino-acid biosynthesis; L-histidine biosynthesis; L-histidine from 5-phospho-alpha-D-ribose 1-diphosphate: step 5/9. Functionally, IGPS catalyzes the conversion of PRFAR and glutamine to IGP, AICAR and glutamate. The HisF subunit catalyzes the cyclization activity that produces IGP and AICAR from PRFAR using the ammonia provided by the HisH subunit. In Pseudoalteromonas atlantica (strain T6c / ATCC BAA-1087), this protein is Imidazole glycerol phosphate synthase subunit HisF.